The following is a 141-amino-acid chain: Large ribosomal subunit protein uL16 (141 aa).

It belongs to the universal ribosomal protein uL16 family. In terms of assembly, part of the 50S ribosomal subunit.

Functionally, binds 23S rRNA and is also seen to make contacts with the A and possibly P site tRNAs. The polypeptide is Large ribosomal subunit protein uL16 (Campylobacter concisus (strain 13826)).